The following is a 281-amino-acid chain: Elongation factor Ts (281 aa).

An involved in Mg(2+) ion dislocation from EF-Tu region spans residues 80–83 (TDFV).

Belongs to the EF-Ts family.

The protein resides in the cytoplasm. Associates with the EF-Tu.GDP complex and induces the exchange of GDP to GTP. It remains bound to the aminoacyl-tRNA.EF-Tu.GTP complex up to the GTP hydrolysis stage on the ribosome. The polypeptide is Elongation factor Ts (Aliivibrio fischeri (strain MJ11) (Vibrio fischeri)).